The following is a 116-amino-acid chain: NAD(P)H-quinone oxidoreductase subunit M (116 aa).

It belongs to the complex I NdhM subunit family. In terms of assembly, NDH-1 can be composed of about 15 different subunits; different subcomplexes with different compositions have been identified which probably have different functions.

It localises to the cellular thylakoid membrane. It catalyses the reaction a plastoquinone + NADH + (n+1) H(+)(in) = a plastoquinol + NAD(+) + n H(+)(out). The catalysed reaction is a plastoquinone + NADPH + (n+1) H(+)(in) = a plastoquinol + NADP(+) + n H(+)(out). In terms of biological role, NDH-1 shuttles electrons from an unknown electron donor, via FMN and iron-sulfur (Fe-S) centers, to quinones in the respiratory and/or the photosynthetic chain. The immediate electron acceptor for the enzyme in this species is believed to be plastoquinone. Couples the redox reaction to proton translocation, and thus conserves the redox energy in a proton gradient. Cyanobacterial NDH-1 also plays a role in inorganic carbon-concentration. The chain is NAD(P)H-quinone oxidoreductase subunit M from Synechococcus sp. (strain RCC307).